The chain runs to 1025 residues: Multidrug resistance protein MdtC (1025 aa).

Transmembrane regions (helical) follow at residues 3–23, 333–353, 360–380, 387–407, 431–451, 463–483, 528–548, 853–873, 875–895, 897–917, 953–973, and 984–1004; these read FFALFIYRPVATILLSVAITL, EVEQTLIISVALVILVVFLFL, IIPAVAVPVSLIGTFAAMYLC, LSLMALTIATGFVVDDAIVVL, VGFTVLSMSLSLVAVFLPLLL, FAVTLSVAIGISLLVSLTLTP, LVGVVLLGTIALNIWLYISIP, VILIIAAIATVYIVLGILYES, VHPLTILSTLPSAGVGALLAL, LFNAPFSLIALIGIMLLIGIV, PIMMTTLAALFGALPLVLSGG, and ITIVGGLVMSQLLTLYTTPVV.

Belongs to the resistance-nodulation-cell division (RND) (TC 2.A.6) family. MdtC subfamily. In terms of assembly, part of a tripartite efflux system composed of MdtA, MdtB and MdtC. MdtC forms a heteromultimer with MdtB.

The protein resides in the cell inner membrane. The polypeptide is Multidrug resistance protein MdtC (Shigella boydii serotype 4 (strain Sb227)).